Consider the following 737-residue polypeptide: Fibronectin type III domain-containing protein 7 (737 aa).

The N-terminal stretch at 1-25 is a signal peptide; sequence MAGRPEKCFSLIRFTLLCLKMVISS. 8 Fibronectin type-III domains span residues 28–115, 116–203, 204–288, 289–373, 374–459, 460–544, 545–633, and 631–715; these read APEI…TVLA, APVL…SPRA, PANI…TVAC, APGR…TAPC, CPND…TAPC, SPEI…TVPC, CPAG…CPLG, and PLGV…YSVT. A glycan (N-linked (GlcNAc...) asparagine) is linked at N230. N433 carries an N-linked (GlcNAc...) asparagine glycan.

It is found in the secreted. The protein is Fibronectin type III domain-containing protein 7 (Fndc7) of Mus musculus (Mouse).